Reading from the N-terminus, the 192-residue chain is tRNA (pseudouridine(54)-N(1))-methyltransferase (192 aa).

Residues leucine 114 and glycine 138 each coordinate S-adenosyl-L-methionine.

This sequence belongs to the methyltransferase superfamily. TrmY family. In terms of assembly, homodimer.

The protein localises to the cytoplasm. It carries out the reaction pseudouridine(54) in tRNA + S-adenosyl-L-methionine = N(1)-methylpseudouridine(54) in tRNA + S-adenosyl-L-homocysteine + H(+). Its function is as follows. Specifically catalyzes the N1-methylation of pseudouridine at position 54 (Psi54) in tRNAs. The protein is tRNA (pseudouridine(54)-N(1))-methyltransferase of Aeropyrum pernix (strain ATCC 700893 / DSM 11879 / JCM 9820 / NBRC 100138 / K1).